A 175-amino-acid polypeptide reads, in one-letter code: Inorganic pyrophosphatase (175 aa).

Substrate-binding residues include lysine 30, arginine 44, and tyrosine 56. Mg(2+)-binding residues include aspartate 66, aspartate 71, and aspartate 103. Position 140 (tyrosine 140) interacts with substrate.

The protein belongs to the PPase family. As to quaternary structure, homohexamer. Mg(2+) is required as a cofactor.

The protein localises to the cytoplasm. The catalysed reaction is diphosphate + H2O = 2 phosphate + H(+). Catalyzes the hydrolysis of inorganic pyrophosphate (PPi) forming two phosphate ions. The chain is Inorganic pyrophosphatase from Thermus thermophilus (strain ATCC 27634 / DSM 579 / HB8).